The primary structure comprises 943 residues: Protein translocase subunit SecA (943 aa).

Residues Gln90, 108–112, and Asp509 each bind ATP; that span reads GEGKT. The tract at residues 534-561 is disordered; the sequence is KPDNEHKPPIPQQRNSKSGGGFSANVDS.

The protein belongs to the SecA family. Monomer and homodimer. Part of the essential Sec protein translocation apparatus which comprises SecA, SecYEG and auxiliary proteins SecDF. Other proteins may also be involved.

Its subcellular location is the cell inner membrane. It localises to the cellular thylakoid membrane. It is found in the cytoplasm. It catalyses the reaction ATP + H2O + cellular proteinSide 1 = ADP + phosphate + cellular proteinSide 2.. Its function is as follows. Part of the Sec protein translocase complex. Interacts with the SecYEG preprotein conducting channel. Has a central role in coupling the hydrolysis of ATP to the transfer of proteins into and across the cell membrane, serving as an ATP-driven molecular motor driving the stepwise translocation of polypeptide chains across the membrane. In terms of biological role, probably participates in protein translocation into and across both the cytoplasmic and thylakoid membranes in cyanobacterial cells. The polypeptide is Protein translocase subunit SecA (Prochlorococcus marinus subsp. pastoris (strain CCMP1986 / NIES-2087 / MED4)).